The sequence spans 552 residues: uncharacterized protein (552 aa).

Positions 8 to 200 (KLFADMIIQG…LLCVYEGFLK (193 aa)) constitute a DhaL domain.

This is an uncharacterized protein from Staphylococcus haemolyticus (strain JCSC1435).